The chain runs to 38 residues: MSAPNPNKQPVELNRTSLYWGLLLMFVLAVLFSSYFFN.

A helical membrane pass occupies residues 17-37; that stretch reads SLYWGLLLMFVLAVLFSSYFF.

It belongs to the PsbL family. In terms of assembly, PSII is composed of 1 copy each of membrane proteins PsbA, PsbB, PsbC, PsbD, PsbE, PsbF, PsbH, PsbI, PsbJ, PsbK, PsbL, PsbM, PsbT, PsbX, PsbY, PsbZ, Psb30/Ycf12, at least 3 peripheral proteins of the oxygen-evolving complex and a large number of cofactors. It forms dimeric complexes.

The protein resides in the plastid. It localises to the chloroplast thylakoid membrane. Its function is as follows. One of the components of the core complex of photosystem II (PSII). PSII is a light-driven water:plastoquinone oxidoreductase that uses light energy to abstract electrons from H(2)O, generating O(2) and a proton gradient subsequently used for ATP formation. It consists of a core antenna complex that captures photons, and an electron transfer chain that converts photonic excitation into a charge separation. This subunit is found at the monomer-monomer interface and is required for correct PSII assembly and/or dimerization. This is Photosystem II reaction center protein L from Emiliania huxleyi (Coccolithophore).